An 87-amino-acid chain; its full sequence is Exendin-3 (87 aa).

Positions 1-21 (MKIILWLCVFGLFLATLFPVS) are cleaved as a signal peptide. The propeptide occupies 22–45 (WQMPVESGLSSEDSASSESFASKI). At Ser86 the chain carries Serine amide.

Belongs to the glucagon family. In terms of tissue distribution, expressed by the venom gland.

It is found in the secreted. Stimulates vasoactive intestinal peptide (VIP) receptors in high concentrations (&gt;100 nM), resulting in both an increase in cAMP and amylase secretion from pancreatic acini, although at low concentrations (between 0.3 and 3 nM) it increases cAMP without stimulating amylase release. Stimulates the GLP-1 receptor (GLP1R). Induces hypotension that is mediated by relaxation of cardiac smooth muscle. This Heloderma horridum horridum (Mexican beaded lizard) protein is Exendin-3.